The primary structure comprises 287 residues: 4-hydroxybenzoate octaprenyltransferase (287 aa).

Helical transmembrane passes span 7–27, 30–50, 94–114, 118–138, 142–162, 167–187, 209–229, 235–255, and 266–286; these read FISYGYLIRLDKPIGTLLLLW, LWALWLASSGVLDLSILLIFV, VAVASFLALCAFLLIQPLNAF, LSVLALLVAFIYPFTKRFFAM, VLGIAFGFGIPMAYAAILDFI, WFLFTGNIFWAIAYDTAYAMV, VVVIAISYGMLFLSHLWVAQL, YFLVGWFAALACAIYHLKLVS, and FRHNNWLGGFLFLGIVLGLGV.

The protein belongs to the UbiA prenyltransferase family. Mg(2+) is required as a cofactor.

It is found in the cell inner membrane. The catalysed reaction is all-trans-octaprenyl diphosphate + 4-hydroxybenzoate = 4-hydroxy-3-(all-trans-octaprenyl)benzoate + diphosphate. Its pathway is cofactor biosynthesis; ubiquinone biosynthesis. In terms of biological role, catalyzes the prenylation of para-hydroxybenzoate (PHB) with an all-trans polyprenyl group. Mediates the second step in the final reaction sequence of ubiquinone-8 (UQ-8) biosynthesis, which is the condensation of the polyisoprenoid side chain with PHB, generating the first membrane-bound Q intermediate 3-octaprenyl-4-hydroxybenzoate. This chain is 4-hydroxybenzoate octaprenyltransferase, found in Polynucleobacter necessarius subsp. necessarius (strain STIR1).